We begin with the raw amino-acid sequence, 197 residues long: Imidazoleglycerol-phosphate dehydratase (197 aa).

This sequence belongs to the imidazoleglycerol-phosphate dehydratase family.

The protein localises to the cytoplasm. It catalyses the reaction D-erythro-1-(imidazol-4-yl)glycerol 3-phosphate = 3-(imidazol-4-yl)-2-oxopropyl phosphate + H2O. The protein operates within amino-acid biosynthesis; L-histidine biosynthesis; L-histidine from 5-phospho-alpha-D-ribose 1-diphosphate: step 6/9. This Pseudomonas syringae pv. syringae (strain B728a) protein is Imidazoleglycerol-phosphate dehydratase.